The following is a 200-amino-acid chain: Pyridoxal 5'-phosphate synthase subunit PdxT (200 aa).

An L-glutamine-binding site is contributed by 52–54; it reads GES. The active-site Nucleophile is cysteine 84. Residues arginine 116 and 145-146 contribute to the L-glutamine site; that span reads IR. Active-site charge relay system residues include histidine 181 and glutamate 183.

This sequence belongs to the glutaminase PdxT/SNO family. In the presence of PdxS, forms a dodecamer of heterodimers. Only shows activity in the heterodimer.

The enzyme catalyses aldehydo-D-ribose 5-phosphate + D-glyceraldehyde 3-phosphate + L-glutamine = pyridoxal 5'-phosphate + L-glutamate + phosphate + 3 H2O + H(+). It carries out the reaction L-glutamine + H2O = L-glutamate + NH4(+). It participates in cofactor biosynthesis; pyridoxal 5'-phosphate biosynthesis. Catalyzes the hydrolysis of glutamine to glutamate and ammonia as part of the biosynthesis of pyridoxal 5'-phosphate. The resulting ammonia molecule is channeled to the active site of PdxS. The polypeptide is Pyridoxal 5'-phosphate synthase subunit PdxT (Saccharolobus islandicus (strain Y.N.15.51 / Yellowstone #2) (Sulfolobus islandicus)).